A 99-amino-acid polypeptide reads, in one-letter code: Putative membrane protein insertion efficiency factor (99 aa).

The protein belongs to the UPF0161 family.

It is found in the cell membrane. Could be involved in insertion of integral membrane proteins into the membrane. The polypeptide is Putative membrane protein insertion efficiency factor (Levilactobacillus brevis (strain ATCC 367 / BCRC 12310 / CIP 105137 / JCM 1170 / LMG 11437 / NCIMB 947 / NCTC 947) (Lactobacillus brevis)).